A 494-amino-acid chain; its full sequence is MRSASSLYAAIDLGSNSFHMLVVREVAGSIQTIARIKRKVRLAAGLDADNNLSAEAMDRGWQCLRLFSEQLQDIPPEQIRVVATATLRIAANAGSFLAQAQKLLGCPVNVISGEEEARLIYQGVSHTTGGSDKRLVVDIGGGSTELVTGRGSQPTTLYSLSMGCVTWLERYFSDRQLGKVNFEQAEQAARAMIRPIADSLKAQGWQVCVGASGTVQALQEIMMAQGMDERITLNKLQQLKQRAIECGKLEELEIEGLTLERALVFPSGLSILIAIFSELNISSMTLAGGALREGLLYGMLPLPVDRDIRSRTLHDVQRRFSVDPEQAERVRQLADSFARQVSLQWKLDDRSRELLGSACLLHEIGLSVDFRQAPQHAAYLVRYLDLPGFTPAQKKLLATLLQNQVGNIDLPLLSQQNALLPRIAERLSRLLRLAIIFASRRRDDRLPAVRLQADDDNLTVTLPSGWLEAHPLRAELLEQEARWQGYVHWPLIIA.

It belongs to the GppA/Ppx family. GppA subfamily.

It carries out the reaction guanosine 3'-diphosphate 5'-triphosphate + H2O = guanosine 3',5'-bis(diphosphate) + phosphate + H(+). The protein operates within purine metabolism; ppGpp biosynthesis; ppGpp from GTP: step 2/2. Catalyzes the conversion of pppGpp to ppGpp. Guanosine pentaphosphate (pppGpp) is a cytoplasmic signaling molecule which together with ppGpp controls the 'stringent response', an adaptive process that allows bacteria to respond to amino acid starvation, resulting in the coordinated regulation of numerous cellular activities. In Erwinia tasmaniensis (strain DSM 17950 / CFBP 7177 / CIP 109463 / NCPPB 4357 / Et1/99), this protein is Guanosine-5'-triphosphate,3'-diphosphate pyrophosphatase.